A 577-amino-acid polypeptide reads, in one-letter code: Moesin (577 aa).

The FERM domain occupies 2–295 (PKTINVRVTT…GNHELYMRRR (294 aa)). Position 74 is a phosphoserine (S74). N6-acetyllysine is present on K79. K83 is subject to N6-succinyllysine. Positions 115 to 120 (IYCPPE) match the [IL]-x-C-x-x-[DE] motif motif. Phosphotyrosine is present on Y116. C117 carries the S-nitrosocysteine modification. Residues K139 and K165 each carry the N6-acetyllysine modification. A compositionally biased stretch (basic and acidic residues) spans 375-401 (LEQERKRAQSEAEKLAKERQEAEEAKE). Disordered stretches follow at residues 375-409 (LEQE…ASQD) and 466-518 (AMST…NERV). S407 carries the phosphoserine modification. A compositionally biased stretch (acidic residues) spans 476-487 (AENEQDEQDENG). Positions 492 to 518 (AELRADAMAKDRSEEERTTEAEKNERV) are enriched in basic and acidic residues. Phosphoserine is present on S527. Residue T558 is modified to Phosphothreonine; by ROCK2 and STK10.

In terms of assembly, in resting T-cells, part of a PAG1-NHERF1-MSN complex which is disrupted upon TCR activation. Interacts with NHERF1. Interacts with PPP1R16B. Interacts with PDZD8. Interacts with SELPLG and SYK; these interactions mediate the activation of SYK by SELPLG. Interacts with PDPN (via cytoplasmic domain); this interaction activates RHOA and promotes epithelial-mesenchymal transition. Interacts with SPN/CD43 cytoplasmic tail. Interacts with CD44. Interacts with ICAM2. Interacts with ICAM3 (via C-terminus). Interacts with PDZD8. Interacts with F-actin. Interacts with CD46. Interacts with PTPN6. Phosphorylation on Thr-558 is crucial for the formation of microvilli-like structures. Phosphorylation by ROCK2 suppresses the head-to-tail association of the N-terminal and C-terminal halves resulting in an opened conformation which is capable of actin and membrane-binding. Phosphorylation on Thr-558 by STK10 negatively regulates lymphocyte migration and polarization. In terms of processing, S-nitrosylation of Cys-117 is induced by interferon-gamma and oxidatively-modified low-densitity lipoprotein (LDL(ox)) implicating the iNOS-S100A8/9 transnitrosylase complex.

It is found in the cell membrane. The protein localises to the cytoplasm. The protein resides in the cytoskeleton. It localises to the apical cell membrane. Its subcellular location is the cell projection. It is found in the microvillus membrane. The protein localises to the microvillus. Its activity is regulated as follows. A head-to-tail association, of the N-terminal and C-terminal halves results in a closed conformation (inactive form) which is incapable of actin or membrane-binding. Its function is as follows. Ezrin-radixin-moesin (ERM) family protein that connects the actin cytoskeleton to the plasma membrane and thereby regulates the structure and function of specific domains of the cell cortex. Tethers actin filaments by oscillating between a resting and an activated state providing transient interactions between moesin and the actin cytoskeleton. Once phosphorylated on its C-terminal threonine, moesin is activated leading to interaction with F-actin and cytoskeletal rearrangement. These rearrangements regulate many cellular processes, including cell shape determination, membrane transport, and signal transduction. The role of moesin is particularly important in immunity acting on both T and B-cells homeostasis and self-tolerance, regulating lymphocyte egress from lymphoid organs. Modulates phagolysosomal biogenesis in macrophages. Participates also in immunologic synapse formation. The protein is Moesin of Bos taurus (Bovine).